The following is a 341-amino-acid chain: Methionine import ATP-binding protein MetN 1 (341 aa).

Residues 2-241 (IEFKNVNKVF…PQTNTAKNFV (240 aa)) enclose the ABC transporter domain. 38–45 (GYSGAGKS) contributes to the ATP binding site.

The protein belongs to the ABC transporter superfamily. Methionine importer (TC 3.A.1.24) family. As to quaternary structure, the complex is composed of two ATP-binding proteins (MetN), two transmembrane proteins (MetI) and a solute-binding protein (MetQ).

The protein resides in the cell membrane. The catalysed reaction is L-methionine(out) + ATP + H2O = L-methionine(in) + ADP + phosphate + H(+). The enzyme catalyses D-methionine(out) + ATP + H2O = D-methionine(in) + ADP + phosphate + H(+). Part of the ABC transporter complex MetNIQ involved in methionine import. Responsible for energy coupling to the transport system. This Staphylococcus epidermidis (strain ATCC 35984 / DSM 28319 / BCRC 17069 / CCUG 31568 / BM 3577 / RP62A) protein is Methionine import ATP-binding protein MetN 1.